Reading from the N-terminus, the 145-residue chain is Acidic phospholipase A2 (145 aa).

An N-terminal signal peptide occupies residues Met-1–Ala-19. Residues Ala-20–Leu-27 constitute a propeptide that is removed on maturation. 7 disulfides stabilise this stretch: Cys-38–Cys-97, Cys-52–Cys-144, Cys-54–Cys-70, Cys-69–Cys-125, Cys-76–Cys-118, Cys-86–Cys-111, and Cys-104–Cys-116. Residues Tyr-53, Gly-55, and Gly-57 each coordinate Ca(2+). Residue His-73 is part of the active site. Asp-74 contributes to the Ca(2+) binding site. The active site involves Asp-119.

It belongs to the phospholipase A2 family. Group I subfamily. D49 sub-subfamily. It depends on Ca(2+) as a cofactor. In terms of tissue distribution, expressed by the venom gland.

Its subcellular location is the secreted. The enzyme catalyses a 1,2-diacyl-sn-glycero-3-phosphocholine + H2O = a 1-acyl-sn-glycero-3-phosphocholine + a fatty acid + H(+). Its function is as follows. PLA2 catalyzes the calcium-dependent hydrolysis of the 2-acyl groups in 3-sn-phosphoglycerides. The sequence is that of Acidic phospholipase A2 from Bungarus multicinctus (Many-banded krait).